The following is a 205-amino-acid chain: Ribosomal RNA small subunit methyltransferase G (205 aa).

S-adenosyl-L-methionine contacts are provided by residues glycine 70, leucine 75, 121 to 122, and arginine 136; that span reads IE.

The protein belongs to the methyltransferase superfamily. RNA methyltransferase RsmG family.

It is found in the cytoplasm. The catalysed reaction is guanosine(527) in 16S rRNA + S-adenosyl-L-methionine = N(7)-methylguanosine(527) in 16S rRNA + S-adenosyl-L-homocysteine. In terms of biological role, specifically methylates the N7 position of guanine in position 527 of 16S rRNA. In Methylococcus capsulatus (strain ATCC 33009 / NCIMB 11132 / Bath), this protein is Ribosomal RNA small subunit methyltransferase G.